We begin with the raw amino-acid sequence, 172 residues long: Lytic chitin monooxygenase (172 aa).

Residues 1–30 (MHAGRKTAVLIGAALAPVIAVSLPAASASA) form the signal peptide. Positions 31 and 106 each coordinate Cu cation. The Chitin-binding type-4 domain maps to 31–168 (HGYISNPPSR…DNAFYACIDV (138 aa)).

Cu(2+) serves as cofactor.

The protein resides in the secreted. It carries out the reaction [(1-&gt;4)-N-acetyl-beta-D-glucosaminyl]n+m + reduced acceptor + O2 = [(1-&gt;4)-N-acetyl-beta-D-glucosaminyl]m-1-(1-&gt;4)-2-(acetylamino)-2-deoxy-D-glucono-1,5-lactone + [(1-&gt;4)-N-acetyl-beta-D-glucosaminyl]n + acceptor + H2O.. Its pathway is glycan degradation; chitin degradation. Involved in chitin degradation. Catalyzes the oxidative cleavage of glycosidic bonds in chitin via a copper-dependent mechanism, leading to oxidized chitooligomers with degrees of polymerization of 4-6. Is not active on cellulose. The polypeptide is Lytic chitin monooxygenase (Streptomyces ambofaciens (strain ATCC 23877 / 3486 / DSM 40053 / JCM 4204 / NBRC 12836 / NRRL B-2516)).